Consider the following 456-residue polypeptide: MKETTGADFKSATDSENKKLFIETYGCQMNVADSEVIASIMQMAGYHVCETLDEADAVFMNTCSIRDNAEQKILNRLEFFHSMKKNKRRNLIVGVLGCMAERVKDDLIENHHVDLVVGPDAYLTLPDLVASVEAGEKAINVELSTTETYREVIPSRICGNHISGFVSIMRGCNNFCHYCIVPYTRGRERSRDVESILNEVRDLADKGYKEVTLLGQNVNSYRFEKEGEIITFPMLLRTVAEAVPDMRVRFTTSHPKDMSDETLQVIAETPNVCKHIHLPVQSGSSRILKLMNRKYTREWYLERVAAIRRIIPDCGLSTDIFSGYHSETEEDHQESLSLMRECAYDSAFMFKYSERPGTYASKHLPDDVPEEVKIRRLNEIIELQNRLSAESNARDVGKTFEVMVEGVSKRSREQLFGRTQQNKVVVFDRGNHRIGDFVHVRITEASSATLKGEEVF.

The 117-residue stretch at 18 to 134 folds into the MTTase N-terminal domain; sequence KKLFIETYGC…LPDLVASVEA (117 aa). Residues cysteine 27, cysteine 63, cysteine 98, cysteine 172, cysteine 176, and cysteine 179 each coordinate [4Fe-4S] cluster. Residues 158 to 390 form the Radical SAM core domain; that stretch reads CGNHISGFVS…IELQNRLSAE (233 aa). In terms of domain architecture, TRAM spans 393–456; the sequence is ARDVGKTFEV…SATLKGEEVF (64 aa).

Belongs to the methylthiotransferase family. MiaB subfamily. Monomer. [4Fe-4S] cluster serves as cofactor.

It localises to the cytoplasm. It catalyses the reaction N(6)-dimethylallyladenosine(37) in tRNA + (sulfur carrier)-SH + AH2 + 2 S-adenosyl-L-methionine = 2-methylsulfanyl-N(6)-dimethylallyladenosine(37) in tRNA + (sulfur carrier)-H + 5'-deoxyadenosine + L-methionine + A + S-adenosyl-L-homocysteine + 2 H(+). Its function is as follows. Catalyzes the methylthiolation of N6-(dimethylallyl)adenosine (i(6)A), leading to the formation of 2-methylthio-N6-(dimethylallyl)adenosine (ms(2)i(6)A) at position 37 in tRNAs that read codons beginning with uridine. The polypeptide is tRNA-2-methylthio-N(6)-dimethylallyladenosine synthase (Phocaeicola vulgatus (strain ATCC 8482 / DSM 1447 / JCM 5826 / CCUG 4940 / NBRC 14291 / NCTC 11154) (Bacteroides vulgatus)).